Consider the following 161-residue polypeptide: Leucine-rich colipase-like protein 1 (161 aa).

Positions 1-25 (MSVSVWPPLLLLLLLLLLWAVPTFQ) are cleaved as a signal peptide.

The polypeptide is Leucine-rich colipase-like protein 1 (Lrcol1) (Mus musculus (Mouse)).